Reading from the N-terminus, the 37-residue chain is Large ribosomal subunit protein bL36c (37 aa).

It belongs to the bacterial ribosomal protein bL36 family.

The protein localises to the plastid. Its subcellular location is the chloroplast. The chain is Large ribosomal subunit protein bL36c from Pelargonium hortorum (Common geranium).